The primary structure comprises 3075 residues: Probable polyketide synthase 30 (3075 aa).

A Ketosynthase family 3 (KS3) domain is found at 26-458 (SGDVAVIGIG…GSNVCLILSE (433 aa)). Active-site for beta-ketoacyl synthase activity residues include Cys-198, His-337, and His-381. Residues 663 to 696 (GVSADIIIGHSLGEVSSPYCSGMIDFQTLCYLTY) are acyl/malonyl transferase. The For acyl/malonyl transferase activity role is filled by Ser-673. The segment at 963-1085 (GPSINNLGNN…GNFSLTKHNS (123 aa)) is N-terminal hotdog fold. The region spanning 963–1269 (GPSINNLGNN…CALVSLGSNP (307 aa)) is the PKS/mFAS DH domain. The active-site Proton acceptor; for dehydratase activity is the His-997. Residues 1102 to 1269 (NFTSMSKQDF…CALVSLGSNP (168 aa)) are C-terminal hotdog fold. Asp-1174 (proton donor; for dehydratase activity) is an active-site residue. A Carrier domain is found at 2533-2610 (DNNEIIRSTI…QSIEIIKSAH (78 aa)). Position 2570 is an O-(pantetheine 4'-phosphoryl)serine (Ser-2570).

It depends on pantetheine 4'-phosphate as a cofactor.

Probable polyketide synthase. May be involved in the process of cell migration. This is Probable polyketide synthase 30 (pks30) from Dictyostelium discoideum (Social amoeba).